We begin with the raw amino-acid sequence, 114 residues long: Putative toxin HigB3 (114 aa).

The protein belongs to the mycobacterial HigB family.

In terms of biological role, putative toxic component of a type II toxin-antitoxin (TA) system. Its cognate antitoxin would be HigA3. Not toxic upon expression in M.smegmatis. In Mycobacterium tuberculosis (strain ATCC 25618 / H37Rv), this protein is Putative toxin HigB3.